A 351-amino-acid chain; its full sequence is Serine/threonine-protein kinase mos (351 aa).

The 270-residue stretch at 71-340 (FSIDGVIGSG…ERRTDDTENL (270 aa)) folds into the Protein kinase domain. ATP-binding positions include 77–85 (IGSGGFGSV) and lysine 98. Aspartate 194 (proton acceptor) is an active-site residue.

The protein belongs to the protein kinase superfamily. Ser/Thr protein kinase family.

It catalyses the reaction L-seryl-[protein] + ATP = O-phospho-L-seryl-[protein] + ADP + H(+). The enzyme catalyses L-threonyl-[protein] + ATP = O-phospho-L-threonyl-[protein] + ADP + H(+). In terms of biological role, suppresses the mitotic cell cycle in oocytes, forcing them to undergo meiosis II to produce haploid gametes. Acts as a MAPK kinase kinase (MAP3K) that acts upstream of MAP kinase in oocytes. The protein is Serine/threonine-protein kinase mos of Patiria pectinifera (Starfish).